Consider the following 284-residue polypeptide: Probable O-methyltransferase ustE (284 aa).

2 N-linked (GlcNAc...) asparagine glycosylation sites follow: asparagine 22 and asparagine 29. 2 helical membrane-spanning segments follow: residues 88–108 and 157–177; these read LLLL…VLTV and YLAT…VCEI. An N-linked (GlcNAc...) asparagine glycan is attached at asparagine 205. Residues 215–235 form a helical membrane-spanning segment; it reads GLALASGGMIYGMSIAMFFMW. Asparagine 264 carries N-linked (GlcNAc...) asparagine glycosylation.

This sequence belongs to the class VI-like SAM-binding methyltransferase superfamily. Isoprenylcysteine carboxyl methyltransferase family.

It is found in the membrane. It functions in the pathway secondary metabolite biosynthesis. Its function is as follows. Probable O-methyltransferase; part of the gene cluster that mediates the biosynthesis of ustilaginoidins, dimeric gamma-naphthopyrones isolated from different fungal species. The first step in the biosynthesis of ustilaginoidins is the production of gamma-naphthopyrone precursor YWA1 by the non-reducing polyketide synthase ustP, via condensation of one acetyl-CoA starter unit with 6 malonyl-CoA units. YWA1 is then probably substrate of the ustZ to yield norrubrofusarin via a dehydration reaction. A key enzyme in the biosynthetic pathway is the laccase ustL, which catalyzes the oxidative dimerization of norrubrofusarin to ustilaginoidin A. It can produce the M- and P-atropisomers in varying amounts, depending on the reaction conditions. For the biosynthesis of 3-methylustilaginoid in derivatives such as chaetochromin A, a methylated derivative of YWA1 is required. The C-methylation is considered to be catalyzed by ustM, the phosphopantetheine attachment site of which indicates that it acts on the growing polyketide chain before release of the product. For the biosynthesis of chaetochromin A, it is assumed that saturation of the D2 double bond takes place before dimerization, and is probably catalyzed by an external reductase because no candidate gene was identified within the cluster. This is Probable O-methyltransferase ustE from Ustilaginoidea virens (Rice false smut fungus).